Reading from the N-terminus, the 253-residue chain is DNA repair protein RecO (253 aa).

The protein belongs to the RecO family.

In terms of biological role, involved in DNA repair and RecF pathway recombination. The polypeptide is DNA repair protein RecO (Pediococcus pentosaceus (strain ATCC 25745 / CCUG 21536 / LMG 10740 / 183-1w)).